We begin with the raw amino-acid sequence, 292 residues long: UPF0761 membrane protein Ping_3482 (292 aa).

6 helical membrane passes run 43-63 (LLSI…FPVF), 100-120 (MSMM…STID), 139-159 (FTIY…SLAL), 179-199 (LLSL…YTLV), 209-229 (ALIG…LFRL), and 243-263 (ALAV…IVLI).

This sequence belongs to the UPF0761 family.

Its subcellular location is the cell inner membrane. In Psychromonas ingrahamii (strain DSM 17664 / CCUG 51855 / 37), this protein is UPF0761 membrane protein Ping_3482.